The primary structure comprises 141 residues: Protein C19orf12 homolog (141 aa).

Residues 37–57 (GLAFAGGLIGGPLGIAVGGAV) traverse the membrane as a helical segment.

Belongs to the C19orf12 family.

It localises to the mitochondrion. The protein localises to the mitochondrion membrane. The protein resides in the endoplasmic reticulum. Its subcellular location is the cytoplasm. It is found in the cytosol. The sequence is that of Protein C19orf12 homolog from Danio rerio (Zebrafish).